Reading from the N-terminus, the 134-residue chain is Large ribosomal subunit protein eL32 (134 aa).

Belongs to the eukaryotic ribosomal protein eL32 family.

The polypeptide is Large ribosomal subunit protein eL32 (RpL32) (Drosophila acanthoptera (Fruit fly)).